A 481-amino-acid polypeptide reads, in one-letter code: MVKICCIGAGYVGGPTMAVMALKCPEIEVVVVDISEPRINAWNSDRLPIYEPGLEDVVKQCRGKNLFFSTDVEKHVFESDIVFVSVNTPTKTQGLGAGKAADLTYWESAARMIADVSKSSKIVVEKSTVPVRTAEAIEKILTHNSKGIEFQILSNPEFLAEGTAIKDLYNPDRVLIGGRDTAAGQKAIKALRDVYAHWVPVEQIICTNLWSAELSKLAANAFLAQRISSVNAMSALCEATGADVTQVAHAVGTDTRIGPKFLNASVGFGGSCFQKDILNLIYICECNGLPEAANYWKQVVKVNDYQKIRFANRVVSSMFNTVSGKKIAILGFAFKKDTGDTRETPAIDVCNRLVADKAKLSIYDPQVLEEQIRRDLSMARFDWDHPVPLQQIKAEGISEQVNVVSDAYEATKDAHGLCVLTEWDEFKSLDFKKIFDNMQKPAFVFDGRNVVDAVKLREIGFIVYSIGKPLDSWLKDMPAVA.

Residues 8–13 (GAGYVG), aspartate 33, arginine 38, 86–90 (VNTPT), 127–128 (ST), and glutamate 161 contribute to the NAD(+) site. Residues 157 to 161 (EFLAE), 216 to 223 (KLAANAFL), and 256 to 269 (RIGPKFLNASVGFG) contribute to the substrate site. The Nucleophile role is filled by cysteine 272. Position 272–275 (272–275 (CFQK)) interacts with NAD(+). Substrate is bound at residue 334–335 (FK). Arginine 342 contacts NAD(+). A substrate-binding site is contributed by arginine 448.

Belongs to the UDP-glucose/GDP-mannose dehydrogenase family.

It catalyses the reaction UDP-alpha-D-glucose + 2 NAD(+) + H2O = UDP-alpha-D-glucuronate + 2 NADH + 3 H(+). Its pathway is nucleotide-sugar biosynthesis; UDP-alpha-D-glucuronate biosynthesis; UDP-alpha-D-glucuronate from UDP-alpha-D-glucose: step 1/1. With respect to regulation, inhibited by UDP-xylose. In terms of biological role, involved in the biosynthesis of UDP-glucuronic acid (UDP-GlcA), providing nucleotide sugars for cell-wall polymers. The protein is UDP-glucose 6-dehydrogenase 1 (UGD1) of Arabidopsis thaliana (Mouse-ear cress).